The sequence spans 82 residues: Protein costars (82 aa).

It belongs to the costars family.

Its function is as follows. Modulates actin dynamics and cell motility. This Dictyostelium discoideum (Social amoeba) protein is Protein costars (cosA).